The sequence spans 49 residues: Protein OPG059 (49 aa).

Residue methionine 1 is a topological domain, virion surface. A helical membrane pass occupies residues 2–22; sequence VIGLVIFVSVAAAIVGVLSNV. The Intravirion portion of the chain corresponds to 23–49; it reads LDMLMYVEENNEEDARIKEEQELLLLY.

This sequence belongs to the orthopoxvirus OPG058 family.

It localises to the virion membrane. The protein localises to the host membrane. In terms of biological role, may play a role in cell adhesion and is important for virus virulence in vivo, although it is not required for the virus life cycle in cell cultures. The sequence is that of Protein OPG059 (OPG059) from Vaccinia virus (strain Western Reserve) (VACV).